Here is a 494-residue protein sequence, read N- to C-terminus: Ketol-acid reductoisomerase (NADP(+)) (494 aa).

A KARI N-terminal Rossmann domain is found at 14–208; sequence LDQLGRCRFM…GGHRAGCLES (195 aa). Residues 45–48, Arg-68, Arg-76, Ser-78, and 108–110 contribute to the NADP(+) site; these read CGAQ and DKQ. His-132 is an active-site residue. NADP(+) is bound at residue Gly-158. KARI C-terminal knotted domains lie at 209–344 and 345–487; these read SFVA…NYPS and TDVE…MTDM. 4 residues coordinate Mg(2+): Asp-217, Glu-221, Glu-389, and Glu-393. Residue Ser-414 participates in substrate binding.

It belongs to the ketol-acid reductoisomerase family. Mg(2+) serves as cofactor.

It catalyses the reaction (2R)-2,3-dihydroxy-3-methylbutanoate + NADP(+) = (2S)-2-acetolactate + NADPH + H(+). The enzyme catalyses (2R,3R)-2,3-dihydroxy-3-methylpentanoate + NADP(+) = (S)-2-ethyl-2-hydroxy-3-oxobutanoate + NADPH + H(+). Its pathway is amino-acid biosynthesis; L-isoleucine biosynthesis; L-isoleucine from 2-oxobutanoate: step 2/4. It functions in the pathway amino-acid biosynthesis; L-valine biosynthesis; L-valine from pyruvate: step 2/4. Its function is as follows. Involved in the biosynthesis of branched-chain amino acids (BCAA). Catalyzes an alkyl-migration followed by a ketol-acid reduction of (S)-2-acetolactate (S2AL) to yield (R)-2,3-dihydroxy-isovalerate. In the isomerase reaction, S2AL is rearranged via a Mg-dependent methyl migration to produce 3-hydroxy-3-methyl-2-ketobutyrate (HMKB). In the reductase reaction, this 2-ketoacid undergoes a metal-dependent reduction by NADPH to yield (R)-2,3-dihydroxy-isovalerate. In Vibrio vulnificus (strain CMCP6), this protein is Ketol-acid reductoisomerase (NADP(+)).